The following is a 285-amino-acid chain: Transmembrane protein 53-A (285 aa).

A helical transmembrane segment spans residues 165-185; sequence FLALAAFAILVIILRILLYPL.

Belongs to the TMEM53 family.

It localises to the nucleus outer membrane. In terms of biological role, ensures normal bone formation, through the negative regulation of bone morphogenetic protein (BMP) signaling in osteoblast lineage cells by blocking cytoplasm-nucleus translocation of phosphorylated SMAD proteins. This is Transmembrane protein 53-A (tmem53-a) from Xenopus laevis (African clawed frog).